Here is a 101-residue protein sequence, read N- to C-terminus: Large ribosomal subunit protein eL30 (101 aa).

Belongs to the eukaryotic ribosomal protein eL30 family.

This Pyrobaculum calidifontis (strain DSM 21063 / JCM 11548 / VA1) protein is Large ribosomal subunit protein eL30.